Reading from the N-terminus, the 559-residue chain is Phosphatase and actin regulator 3 (559 aa).

The disordered stretch occupies residues 1–65 (MAASEDGSGC…GIRTPPVRRN (65 aa)). Polar residues predominate over residues 15–24 (GRSQSDPSVL). The segment covering 25–35 (TDSSATSSADA) has biased composition (low complexity). T70 carries the phosphothreonine modification. Positions 82 to 342 (KKKNEKLKQT…VERGKEREEA (261 aa)) are disordered. Residues 93–118 (SALEKKMAGRQGREELIKKGLLEMME) form an RPEL 1 repeat. Residues 95-113 (LEKKMAGRQGREELIKKGL) are compositionally biased toward basic and acidic residues. Over residues 134–151 (SVQSEPPTPKSETLTSED) the composition is skewed to polar residues. A compositionally biased stretch (pro residues) spans 229–240 (PSPPLLPTPPPK). S230 carries the phosphoserine modification. T236 carries the phosphothreonine modification. Polar residues-rich tracts occupy residues 248 to 262 (NVTG…SSMK) and 270 to 281 (GQLSTPTGSPHL). A compositionally biased stretch (basic and acidic residues) spans 293–342 (VIEELHRALATKHRQDSFQGRESKGSPKKRLDVRLSRTSSVERGKEREEA). Residues 346–369 (DGALENKRTAAKESEENKENLIIN) adopt a coiled-coil conformation. 3 RPEL repeats span residues 401–426 (ELLA…PRRT), 439–464 (MKLS…KQRN), and 477–502 (QRLT…IRFS). Positions 438–518 (EMKLSKRLSQ…KAQDYDRRAD (81 aa)) are required for PP1CA binding and inhibition of PP1 activity. A coiled-coil region spans residues 450 to 486 (AVEELERRNILKQRNDQTEQEERREIKQRLTRKLNQR).

This sequence belongs to the phosphatase and actin regulator family. As to quaternary structure, binds actin and PPP1CA; thus inhibiting the protein phosphatase 1 (PP1) activity. Abundantly expressed in brain. Also found in several tumors such as lung carcinomas, nervous tumors and HL-60 leukemia cells. Isoform 3 is the major form in U-937, GOTO and HL-60 leukemia cells.

It is found in the nucleus matrix. This Homo sapiens (Human) protein is Phosphatase and actin regulator 3 (PHACTR3).